The sequence spans 546 residues: Glucose-6-phosphate isomerase (546 aa).

Glu356 serves as the catalytic Proton donor. Active-site residues include His387 and Lys507.

This sequence belongs to the GPI family.

Its subcellular location is the cytoplasm. The enzyme catalyses alpha-D-glucose 6-phosphate = beta-D-fructose 6-phosphate. It functions in the pathway carbohydrate biosynthesis; gluconeogenesis. Its pathway is carbohydrate degradation; glycolysis; D-glyceraldehyde 3-phosphate and glycerone phosphate from D-glucose: step 2/4. In terms of biological role, catalyzes the reversible isomerization of glucose-6-phosphate to fructose-6-phosphate. This chain is Glucose-6-phosphate isomerase, found in Syntrophus aciditrophicus (strain SB).